A 239-amino-acid polypeptide reads, in one-letter code: ATP-dependent dethiobiotin synthetase BioD (239 aa).

22–27 (GIGKTV) contributes to the ATP binding site. Position 26 (threonine 26) interacts with Mg(2+). Residue lysine 47 is part of the active site. Threonine 51 provides a ligand contact to substrate. ATP is bound by residues aspartate 59, 124–127 (EGVG), and 184–185 (NR). Aspartate 59 and glutamate 124 together coordinate Mg(2+).

It belongs to the dethiobiotin synthetase family. In terms of assembly, homodimer. The cofactor is Mg(2+).

The protein resides in the cytoplasm. The catalysed reaction is (7R,8S)-7,8-diammoniononanoate + CO2 + ATP = (4R,5S)-dethiobiotin + ADP + phosphate + 3 H(+). The protein operates within cofactor biosynthesis; biotin biosynthesis; biotin from 7,8-diaminononanoate: step 1/2. Catalyzes a mechanistically unusual reaction, the ATP-dependent insertion of CO2 between the N7 and N8 nitrogen atoms of 7,8-diaminopelargonic acid (DAPA, also called 7,8-diammoniononanoate) to form a ureido ring. This is ATP-dependent dethiobiotin synthetase BioD from Chlorobaculum tepidum (strain ATCC 49652 / DSM 12025 / NBRC 103806 / TLS) (Chlorobium tepidum).